The following is a 404-amino-acid chain: Glutamate-pyruvate aminotransferase AlaA (404 aa).

The L-alanine site is built by G41 and N179. K240 carries the post-translational modification N6-(pyridoxal phosphate)lysine. R378 lines the L-alanine pocket.

This sequence belongs to the class-I pyridoxal-phosphate-dependent aminotransferase family. In terms of assembly, homodimer. Pyridoxal 5'-phosphate serves as cofactor.

It carries out the reaction L-alanine + 2-oxoglutarate = pyruvate + L-glutamate. The protein operates within amino-acid biosynthesis; L-alanine biosynthesis. In terms of biological role, involved in the biosynthesis of alanine. Catalyzes the transamination of pyruvate by glutamate, leading to the formation of L-alanine and 2-oxoglutarate. Is also able to catalyze the reverse reaction. This chain is Glutamate-pyruvate aminotransferase AlaA (alaA), found in Haemophilus influenzae (strain ATCC 51907 / DSM 11121 / KW20 / Rd).